The following is an 855-amino-acid chain: Nuclear valosin-containing protein-like (855 aa).

Residues 1 to 219 form an interaction with RPL5 region; sequence MKPRPGVFVD…SLLESDKKRK (219 aa). The Nucleolar localization signal signature appears at 49–52; sequence RRKR. Lysine 70 is modified (N6-acetyllysine). Residues 83 to 234 are disordered; that stretch reads LAKRARQDEE…KGNKRKTENL (152 aa). A Nuclear localization signal motif is present at residues 85–88; that stretch reads KRAR. Residues 90–110 show a composition bias toward acidic residues; it reads DEEDEYTESYSDDDSNMEDYP. 2 stretches are compositionally biased toward polar residues: residues 113–123 and 131–157; these read QSANPMNSSLL and SESVSTTPKWGQREATTSTPLLTSKTG. A Phosphoserine modification is found at serine 133. At threonine 137 the chain carries Phosphothreonine. Lysine 155 is subject to N6-acetyllysine. Position 190 is a phosphoserine (serine 190). A Glycyl lysine isopeptide (Lys-Gly) (interchain with G-Cter in SUMO2) cross-link involves residue lysine 207. Phosphoserine occurs at positions 210 and 214. Residues 217–228 show a composition bias toward basic residues; that stretch reads KRKGRAKGKGNK. The Nuclear localization signal motif lies at 217–231; that stretch reads KRKGRAKGKGNKRKT. Residues 266-473 form an interaction with WDR74 region; it reads VGGNDATLKE…LTPGFVGADL (208 aa). 304 to 311 is a binding site for ATP; the sequence is GPPGCGKT. The interval 496-523 is disordered; the sequence is QKKKPEIEGLPSEGDQEERLGAEPTSET. Position 621 to 628 (621 to 628) interacts with ATP; sequence GPPGCGKT.

It belongs to the AAA ATPase family. As to quaternary structure, interacts with NCL/nucleolin. Isoform 1 and isoform 2 interact with TERT and isoform 1 exhibits a higher binding affinity for TERT compared to isoform 2. Isoform 1 interacts with MTREX in an ATP-dependent manner; the interaction is required to associate NVL with nuclear RNA exosome. Isoform 1 interacts with RPL5 in an ATP-dependent manner. Interacts with WDR74 (through WDR repeats); the interaction is independent of RNA or pre-60S ribosome particles.

It is found in the nucleus. The protein resides in the nucleolus. It localises to the nucleoplasm. Participates in the assembly of the telomerase holoenzyme and effecting of telomerase activity via its interaction with TERT. Involved in both early and late stages of the pre-rRNA processing pathways. Spatiotemporally regulates 60S ribosomal subunit biogenesis in the nucleolus. Catalyzes the release of specific assembly factors, such as WDR74, from pre-60S ribosomal particles through the ATPase activity. This Mus musculus (Mouse) protein is Nuclear valosin-containing protein-like.